The following is a 156-amino-acid chain: Putative F-box protein R637 (156 aa).

One can recognise an F-box domain in the interval 4–51; it reads HISSLLNEDCVRHIMCFLTDKEKGKFCLTCRDLLYLIKDVKFNDPVNK.

This chain is Putative F-box protein R637, found in Acanthamoeba polyphaga mimivirus (APMV).